Here is a 535-residue protein sequence, read N- to C-terminus: MSVVCRSSCSLLLLPCLLLCVLGPSASHAGKLLVIPIDGSHWLSMLGVIQQLQQKGHEVVVIAPEASIHIKEGSFYTMRKYPVPFQNENVTAAFVELGRSVFDQDPFLLRVVKTYNKVKRDSSMLLSGCSHLLHNAEFMASLEQSHFDALLTDPFLPCGSIVAQYLSLPAVYFLNALPCSLDLEATQCPAPLSYVPKSLSSNTDRMNFLQRVKNMIIALTENFLCRVVYSPYGSLATEILQKEVTVKDLLSPASIWLMRNDFVKDYPRPIMPNMVFIGGINCLQKKALSQEFEAYVNASGEHGIVVFSLGSMVSEIPEKKAMEIAEALGRIPQTVLWRYTGTRPSNLAKNTILVKWLPQNDLLGHPKARAFITHSGSHGIYEGICNGVPMVMMPLFGDQMDNAKRMETRGAGVTLNVLEMTADDLENALKTVINNKSYKENIMRLSSLHKDRPIEPLDLAVFWVEYVMRHKGAPHLRPAAHDLTWYQYHSLDVIGFLLAIVLTVVFIVYKSCAYGCRKCFGGKGRVKKSHKSKTH.

A signal peptide spans 1–29 (MSVVCRSSCSLLLLPCLLLCVLGPSASHA). Residues N89, N297, and N435 are each glycosylated (N-linked (GlcNAc...) asparagine). Residues 493 to 509 (VIGFLLAIVLTVVFIVY) form a helical membrane-spanning segment.

This sequence belongs to the UDP-glycosyltransferase family. As to quaternary structure, homodimers. Homooligomer. Interacts with UGT1A3, UGT1A4, UGT1A6, UGT1A7, UGT1A8, UGT1A9 and UGT1A10 to form heterodimers.

The protein localises to the endoplasmic reticulum membrane. The catalysed reaction is glucuronate acceptor + UDP-alpha-D-glucuronate = acceptor beta-D-glucuronoside + UDP + H(+). The enzyme catalyses 17beta-estradiol + UDP-alpha-D-glucuronate = 17beta-estradiol 3-O-(beta-D-glucuronate) + UDP + H(+). It catalyses the reaction 2-hydroxyestrone + UDP-alpha-D-glucuronate = 2-hydroxyestrone 3-O-(beta-D-glucuronate) + UDP + H(+). It carries out the reaction 2-hydroxy-17beta-estradiol + UDP-alpha-D-glucuronate = 2-hydroxy-17beta-estradiol 3-O-(beta-D-glucuronate) + UDP + H(+). The catalysed reaction is 2-methoxy-17beta-estradiol + UDP-alpha-D-glucuronate = 2-methoxy-17beta-estradiol 3-O-(beta-D-glucuronate) + UDP + H(+). The enzyme catalyses 17alpha-estradiol + UDP-alpha-D-glucuronate = 17alpha-estradiol 3-O-(beta-D-glucuronate) + UDP + H(+). It catalyses the reaction 16beta,17beta-estriol + UDP-alpha-D-glucuronate = 16beta,17beta-estriol 16-O-(beta-D-glucuronate) + UDP + H(+). It carries out the reaction losartan + UDP-alpha-D-glucuronate = losartan-2-N-beta-D-glucuronide + UDP. The catalysed reaction is prunetin + UDP-alpha-D-glucuronate = prunetin-4'-O-beta-D-glucuronide + UDP. The enzyme catalyses SN-38 + UDP-alpha-D-glucuronate = SN-38 O-beta-D-glucuronide + UDP + H(+). It catalyses the reaction (4Z,15Z)-bilirubin IXalpha + UDP-alpha-D-glucuronate = (4Z,15Z)-bilirubin IXalpha C12-beta-D-glucuronoside + UDP. It carries out the reaction (4Z,15Z)-bilirubin IXalpha + UDP-alpha-D-glucuronate = (4Z,15Z)-bilirubin IXalpha C8-beta-D-glucuronoside + UDP. The catalysed reaction is (4Z,15Z)-bilirubin IXalpha C8-beta-D-glucuronoside + UDP-alpha-D-glucuronate = (4Z,15Z)-bilirubin IXalpha C8,C12-beta-D-bisglucuronoside + UDP. The enzyme catalyses (4Z,15Z)-bilirubin IXalpha C12-beta-D-glucuronoside + UDP-alpha-D-glucuronate = (4Z,15Z)-bilirubin IXalpha C8,C12-beta-D-bisglucuronoside + UDP. It catalyses the reaction 8-iso-prostaglandin F2alpha + UDP-alpha-D-glucuronate = 8-iso-prostaglandin F2alpha-glucuronide + UDP + H(+). It carries out the reaction (5Z,8Z,11Z,14Z)-eicosatetraenoate + UDP-alpha-D-glucuronate = O-[(5Z),(8Z),(11Z),(14Z)-eicosatetraenoyl]-beta-D-glucuronate + UDP. The catalysed reaction is 15-hydroxy-(5Z,8Z,11Z,13E)-eicosatetraenoate + UDP-alpha-D-glucuronate = 15-O-(beta-D-glucuronosyl)-(5Z,8Z,11Z,14Z)-eicosatetraenoate + UDP + H(+). The enzyme catalyses 20-hydroxy-(5Z,8Z,11Z,14Z)-eicosatetraenoate + UDP-alpha-D-glucuronate = 20-O-(beta-D-glucuronosyl)-(5Z,8Z,11Z,14Z)-eicosatetraenoate + UDP + H(+). It catalyses the reaction prostaglandin B1 + UDP-alpha-D-glucuronate = 15-O-(beta-D-glucuronosyl)-prostaglandin B1 + UDP + H(+). It carries out the reaction (E)-ferulate + UDP-alpha-D-glucuronate = (E)-4-O-(beta-D-glucuronosyl)-ferulate + UDP + H(+). The catalysed reaction is (E)-ferulate + UDP-alpha-D-glucuronate = (E)-ferulic acid beta-D-glucuronate ester + UDP. Its function is as follows. UDP-glucuronosyltransferase (UGT) that catalyzes phase II biotransformation reactions in which lipophilic substrates are conjugated with glucuronic acid to increase the metabolite's water solubility, thereby facilitating excretion into either the urine or bile. Essential for the elimination and detoxification of drugs, xenobiotics and endogenous compounds. Catalyzes the glucuronidation of endogenous estrogen hormones such as estradiol, estrone and estriol. Involved in the glucuronidation of bilirubin, a degradation product occurring in the normal catabolic pathway that breaks down heme in vertebrates. Involved in the glucuronidation of arachidonic acid (AA) and AA-derived eicosanoids including 15-HETE, 20-HETE, PGB1 and F2-isoprostane (8-iso-PGF2alpha). Involved in the glucuronidation of the phytochemical ferulic acid at the phenolic or the carboxylic acid group. Also catalyzes the glucuronidation the isoflavones genistein, daidzein, glycitein, formononetin, biochanin A and prunetin, which are phytoestrogens with anticancer and cardiovascular properties. Involved in the glucuronidation of the AGTR1 angiotensin receptor antagonist losartan, a drug which can inhibit the effect of angiotensin II. Involved in the biotransformation of 7-ethyl-10-hydroxycamptothecin (SN-38), the pharmacologically active metabolite of the anticancer drug irinotecan. This chain is UDP-glucuronosyltransferase 1A1, found in Rattus norvegicus (Rat).